The following is a 469-amino-acid chain: Acetyl-CoA decarbonylase/synthase complex subunit beta 2 (469 aa).

Residues C187, C190, C276, and C278 each contribute to the [Ni-Fe-S] cluster site.

Belongs to the CdhC family. In terms of assembly, monomer. The ACDS complex is made up of alpha, epsilon, beta, gamma and delta chains with a probable stoichiometry of (alpha(2)epsilon(2))(4)-beta(8)-(gamma(1)delta(1))(8) (Potential). The cofactor is [Ni-Fe-S] cluster.

The enzyme catalyses Co(I)-[corrinoid Fe-S protein] + acetyl-CoA + H(+) = methyl-Co(III)-[corrinoid Fe-S protein] + CO + CoA. Its function is as follows. Part of a complex that catalyzes the reversible cleavage of acetyl-CoA, allowing autotrophic growth from CO(2). The alpha-epsilon complex generates CO from CO(2), while the beta subunit (this protein) combines the CO with CoA and a methyl group to form acetyl-CoA. The methyl group, which is incorporated into acetyl-CoA, is transferred to the beta subunit by a corrinoid iron-sulfur protein (the gamma-delta complex). In Methanocaldococcus jannaschii (strain ATCC 43067 / DSM 2661 / JAL-1 / JCM 10045 / NBRC 100440) (Methanococcus jannaschii), this protein is Acetyl-CoA decarbonylase/synthase complex subunit beta 2 (cdhC2).